A 108-amino-acid polypeptide reads, in one-letter code: uncharacterized protein (108 aa).

Residues 72 to 94 (LGLHTSVFFFLRIVCMSSAASVF) form a helical membrane-spanning segment.

It is found in the membrane. This is an uncharacterized protein from Saccharomyces cerevisiae (strain ATCC 204508 / S288c) (Baker's yeast).